The chain runs to 327 residues: Thiamine-binding periplasmic protein (327 aa).

Residues 1-18 (MLKKYLPLLLLCAAPAFA) form the signal peptide. Thiamine contacts are provided by residues 59-60 (DG), 161-162 (ST), Trp-197, and 215-218 (YTTS).

It belongs to the bacterial solute-binding protein 1 family. As to quaternary structure, the complex is composed of two ATP-binding proteins (ThiQ), two transmembrane proteins (ThiP) and a solute-binding protein (ThiB).

The protein localises to the periplasm. Its function is as follows. Part of the ABC transporter complex ThiBPQ involved in thiamine import. Is also involved in thiamine pyrophosphate transport. The chain is Thiamine-binding periplasmic protein from Salmonella typhimurium (strain LT2 / SGSC1412 / ATCC 700720).